Here is a 761-residue protein sequence, read N- to C-terminus: MEALEVDDISPALEVTEEFFSTLDSNLEKAVQQAEVYGIQEVPELVGHEVLSNITDNGAMRNVTSLGKGGMIWDHCKSRLLETKAQNVFPAKEQFMVQRGTTPDNLSWMEQKEASTFNFFNICQRRRDRPRSVNDLLDETSTFKPGHARSRSDITQVDWRVVLKTTPLQQQQQQQPLLQGPHVTRPSFLLPSPNKIEDAQGNTEHKQTFPNILKKGYLEIRKDHDSYWQSCYAELSPYNLYFYSLDSSGNQNLYATYQLSHFQSISVLGNLEARMVDTVLYDNTQLQLKAESPWEALDWGQKLWEVVHAAVPGYMGRQNELTISPGLGHHDDYTQNHSFQKKTSGLLPPSPVLDSSKQYQNILKSGTLYRLTVQNNWKAFTFVLSRAYLMAFQPGKLDEDPLLSYNVDVCLAVQMDNLDGCDSCFQVIFPQDVLRLRAETRQRAQEWMEALKIAANVARSSEQNLQVTLRNKPKDQMGGHELRKNKRQSVTTSFLSILTTLSLERGLTAQSFKCAGCQRSIGLSNGKAKVCNYSGWYYCSSCHVDDSFLIPARIVHNWDTSKYKVSKQAKEFLEYVYEEPLIDIQQENAMLYHHAEPLAAVLRLRQRLKSLRAYLFSCRAAVAEDLRRRIFPREYLLQQIHLYSLADLQQVIEGKLAPFLGKVIKFATSHVYSCSLCSQKGFICEICNNGEILYPFEDISTSRCESCGAVFHSECKEKSVPCPRCVRRELQKKQKSFWQRLNMDESLEEACTMFELSYQNT.

S132 is subject to Phosphoserine. PH domains follow at residues 211–308 and 361–456; these read NILK…EVVH and NILK…IAAN. A Phorbol-ester/DAG-type zinc finger spans residues 669–722; that stretch reads SHVYSCSLCSQKGFICEICNNGEILYPFEDISTSRCESCGAVFHSECKEKSVPC.

As to quaternary structure, interacts with AKT1.

It localises to the cytoplasm. Its subcellular location is the golgi apparatus. The protein resides in the cell membrane. Involved in skeletal muscle differentiation. May act as a scaffold protein for AKT1 during muscle differentiation. This is Pleckstrin homology domain-containing family M member 3 from Homo sapiens (Human).